A 225-amino-acid polypeptide reads, in one-letter code: Orotate phosphoribosyltransferase (225 aa).

K32 serves as a coordination point for 5-phospho-alpha-D-ribose 1-diphosphate. 40–41 (FF) contributes to the orotate binding site. 5-phospho-alpha-D-ribose 1-diphosphate is bound by residues 78–79 (YK), R104, K105, K108, H110, and 129–137 (DDVISAGTS). S133 and R161 together coordinate orotate.

The protein belongs to the purine/pyrimidine phosphoribosyltransferase family. PyrE subfamily. As to quaternary structure, homodimer. Requires Mg(2+) as cofactor.

The enzyme catalyses orotidine 5'-phosphate + diphosphate = orotate + 5-phospho-alpha-D-ribose 1-diphosphate. It functions in the pathway pyrimidine metabolism; UMP biosynthesis via de novo pathway; UMP from orotate: step 1/2. Its function is as follows. Catalyzes the transfer of a ribosyl phosphate group from 5-phosphoribose 1-diphosphate to orotate, leading to the formation of orotidine monophosphate (OMP). The protein is Orotate phosphoribosyltransferase of Cupriavidus metallidurans (strain ATCC 43123 / DSM 2839 / NBRC 102507 / CH34) (Ralstonia metallidurans).